A 555-amino-acid chain; its full sequence is Potassium-transporting ATPase potassium-binding subunit (555 aa).

10 helical membrane-spanning segments follow: residues 2-22 (IWVA…PTGI), 60-80 (QYAL…YFIF), 130-150 (IGIT…VMAF), 173-193 (VFLP…VPQT), 246-266 (MSNI…PFTY), 278-298 (ILFV…TTSE), 374-394 (AGFV…GLMV), 412-432 (LIAV…ALAL), 483-503 (LVMF…AASL), and 525-545 (GIFI…MLVL).

This sequence belongs to the KdpA family. In terms of assembly, the system is composed of three essential subunits: KdpA, KdpB and KdpC.

Its subcellular location is the cell membrane. Part of the high-affinity ATP-driven potassium transport (or Kdp) system, which catalyzes the hydrolysis of ATP coupled with the electrogenic transport of potassium into the cytoplasm. This subunit binds the extracellular potassium ions and delivers the ions to the membrane domain of KdpB through an intramembrane tunnel. This Bacillus thuringiensis (strain Al Hakam) protein is Potassium-transporting ATPase potassium-binding subunit.